The chain runs to 300 residues: MIVMDQIAAMQALMRQYRREGKTIGFVPTMGYLHEGHTSLIDRARAENDIVVLSVFVNPLQFGPNEDFARYPRDFERDRRIAEQHGVDVLFHPEADEMYPEPLTVRAIVQARADVLCGRSRPGHFDGVATVLMKLFNIVMPDRAYFGMKDAQQVAVVDGLIRDLNFPIELVPVPTVREADGLAKSSRNVYLSPQERSEAPALYAALQAAASAVERGERSAAAIRRMVREHIEAHTHAEIDYVEVCSYPDLTPLETLAGTVLIAVAVRFASARLIDNIMIELPKTGEQGDGKGEQACFARS.

30–37 (MGYLHEGH) serves as a coordination point for ATP. Residue H37 is the Proton donor of the active site. Q61 serves as a coordination point for (R)-pantoate. Q61 is a beta-alanine binding site. 147-150 (GMKD) contacts ATP. Q153 is a (R)-pantoate binding site. ATP is bound by residues V176 and 184–187 (KSSR).

The protein belongs to the pantothenate synthetase family. In terms of assembly, homodimer.

The protein resides in the cytoplasm. The enzyme catalyses (R)-pantoate + beta-alanine + ATP = (R)-pantothenate + AMP + diphosphate + H(+). The protein operates within cofactor biosynthesis; (R)-pantothenate biosynthesis; (R)-pantothenate from (R)-pantoate and beta-alanine: step 1/1. Catalyzes the condensation of pantoate with beta-alanine in an ATP-dependent reaction via a pantoyl-adenylate intermediate. The sequence is that of Pantothenate synthetase from Geobacillus kaustophilus (strain HTA426).